Reading from the N-terminus, the 451-residue chain is Adenylosuccinate synthetase isozyme 2 (451 aa).

GTP-binding positions include 34–40 and 62–64; these read GDEGKGK and GHT. The active-site Proton acceptor is Asp-35. Residues Asp-35 and Gly-62 each coordinate Mg(2+). Asp-35 contacts substrate. IMP contacts are provided by residues 35 to 38, 60 to 63, Thr-157, Arg-171, Asn-250, Thr-265, and Arg-329; these read DEGK and NAGH. His-63 functions as the Proton donor in the catalytic mechanism. Residue 325 to 331 coordinates substrate; the sequence is VTTGRKR. GTP contacts are provided by residues Arg-331, 357 to 359, and 439 to 442; these read KLD and GVGK.

It belongs to the adenylosuccinate synthetase family. As to quaternary structure, homodimer. The cofactor is Mg(2+).

The protein localises to the cytoplasm. It localises to the mitochondrion. It catalyses the reaction IMP + L-aspartate + GTP = N(6)-(1,2-dicarboxyethyl)-AMP + GDP + phosphate + 2 H(+). The protein operates within purine metabolism; AMP biosynthesis via de novo pathway; AMP from IMP: step 1/2. Its activity is regulated as follows. Inhibited competitively by AMP and IMP and non-competitively by fructose 1,6-bisphosphate. Its function is as follows. Plays an important role in the de novo pathway and in the salvage pathway of purine nucleotide biosynthesis. Catalyzes the first committed step in the biosynthesis of AMP from IMP. The protein is Adenylosuccinate synthetase isozyme 2 of Gallus gallus (Chicken).